Here is a 327-residue protein sequence, read N- to C-terminus: Delta(3,5)-Delta(2,4)-dienoyl-CoA isomerase, mitochondrial (327 aa).

A mitochondrion-targeting transit peptide spans 1–33 (MATAMTVSSKLRGLLMQQLRGTSQLYFNISLRS). Substrate is bound at residue 115–119 (SGIDL). Lys147 bears the N6-acetyllysine mark. Gly173 is a binding site for substrate. Residue Lys230 is modified to N6-succinyllysine. At Ser267 the chain carries Phosphoserine. Residue Lys316 is modified to N6-succinyllysine. The short motif at 325–327 (SKL) is the Microbody targeting signal element. Position 326 is an N6-acetyllysine (Lys326).

It belongs to the enoyl-CoA hydratase/isomerase family. As to quaternary structure, homohexamer.

It is found in the mitochondrion. The protein resides in the peroxisome. It carries out the reaction (3E,5Z)-octadienoyl-CoA = (2E,4E)-octadienoyl-CoA. The enzyme catalyses (3E,5Z,8Z,11Z,14Z)-eicosapentaenoyl-CoA = (2E,4E,8Z,11Z,14Z)-eicosapentaenoyl-CoA. It participates in lipid metabolism; fatty acid beta-oxidation. In terms of biological role, isomerization of 3-trans,5-cis-dienoyl-CoA to 2-trans,4-trans-dienoyl-CoA. This chain is Delta(3,5)-Delta(2,4)-dienoyl-CoA isomerase, mitochondrial, found in Mus musculus (Mouse).